The sequence spans 196 residues: uncharacterized protein (196 aa).

Positions 7 to 67 (RNTKEKILTA…AVIDNHVKIW (61 aa)) constitute an HTH tetR-type domain. Positions 30–49 (SINDILDETATGKGQFYYYF) form a DNA-binding region, H-T-H motif.

This is an uncharacterized protein from Lactococcus lactis subsp. lactis (Streptococcus lactis).